A 426-amino-acid polypeptide reads, in one-letter code: MNPSTITNDLTVEILSRLPAKSVARFHCVSKQWGSIFGSPYFKELFLTRSSTKPRLLFAMAEKVNEEKNCVWRFFSTPQLENPYEKSSSTLVAAAEFHVKFSPDKLYICHCYDLKYFSIGYASGLIYLYGDRGEATPLICNPTTGRYAILPNRYTYRKAYSFFGFDPIDKQYKALSIFYPSGPGHSKILTFGAGHMKWRKINCPLRYDRHDIKSEGICINGVLYYLGSTSDCVKDGHGIVSDYVIVCFDIRSEKFTFIDVERFCRLINYKGKLAVIYWEDDVDIYKLYYSDVDEYVEYNINDDDINELRVWVLEDVKKQQWSKYAYTWTDDRFFRRRVSIAGGTASGEIVFSMLKYTPKQPFYVFYFNPERNTLQRVEIQGFGEVLKKTCRVCTFVNHVEDLNVHDFKQLKSVHPPLVDEPDSESD.

One can recognise an F-box domain in the interval methionine 1 to threonine 48.

In Arabidopsis thaliana (Mouse-ear cress), this protein is F-box protein At2g15640.